Consider the following 479-residue polypeptide: Spindly-like protein spdl-1 (479 aa).

Coiled coils occupy residues 4 to 180, 210 to 250, and 321 to 357; these read DEEK…EGEL, EEDL…RFNV, and LMKDNEKYVTIIRGLQQEVENLKADIVQLQFDNKCAH.

In terms of assembly, interacts with Zwilch homolog zwl-1, a component of the RZZ complex. Interacts with mdf-1 and mdf-2.

It is found in the chromosome. Its subcellular location is the centromere. The protein localises to the kinetochore. The protein resides in the cytoplasm. It localises to the cytoskeleton. It is found in the spindle pole. Its function is as follows. Transient kinetochore component required for chromosome and spindle pole alignment and chromosome segregation during mitosis. Functions downstream of the RZZ complex to mediate kinetochore-microtubule attachments and nuclear envelope breakdown during cell division. Required for kinetochore assembly and localizes the checkpoint proteins mdf-1 and mdf-2, dynein and dynactin to unattached kinetochores. Dynein is believed to control the initial lateral interaction between the kinetochore and spindle microtubules and to facilitate the subsequent formation of end-on kinetochore-microtubule attachments mediated by the NDC80 complex. Required for embryonic development. In Caenorhabditis elegans, this protein is Spindly-like protein spdl-1.